The primary structure comprises 156 residues: Small ribosomal subunit protein uS7 (156 aa).

The protein belongs to the universal ribosomal protein uS7 family. As to quaternary structure, part of the 30S ribosomal subunit. Contacts proteins S9 and S11.

One of the primary rRNA binding proteins, it binds directly to 16S rRNA where it nucleates assembly of the head domain of the 30S subunit. Is located at the subunit interface close to the decoding center, probably blocks exit of the E-site tRNA. In Carsonella ruddii (strain PV), this protein is Small ribosomal subunit protein uS7.